The following is a 209-amino-acid chain: Protein GrpE (209 aa).

This sequence belongs to the GrpE family. As to quaternary structure, homodimer.

It localises to the cytoplasm. In terms of biological role, participates actively in the response to hyperosmotic and heat shock by preventing the aggregation of stress-denatured proteins, in association with DnaK and GrpE. It is the nucleotide exchange factor for DnaK and may function as a thermosensor. Unfolded proteins bind initially to DnaJ; upon interaction with the DnaJ-bound protein, DnaK hydrolyzes its bound ATP, resulting in the formation of a stable complex. GrpE releases ADP from DnaK; ATP binding to DnaK triggers the release of the substrate protein, thus completing the reaction cycle. Several rounds of ATP-dependent interactions between DnaJ, DnaK and GrpE are required for fully efficient folding. The polypeptide is Protein GrpE (Colwellia psychrerythraea (strain 34H / ATCC BAA-681) (Vibrio psychroerythus)).